We begin with the raw amino-acid sequence, 249 residues long: Green-light absorbing proteorhodopsin (249 aa).

The first 17 residues, 1-17 (MKLLLILGSVIALPTFA), serve as a signal peptide directing secretion. 7 helical membrane passes run 30–49 (GVSF…FFFV), 62–84 (LTVS…GVWI), 99–121 (LLTV…NVAG), 128–147 (LVGS…GIMA), 151–168 (AFII…ELWA), 189–211 (MMYI…YLMG), and 221–243 (LIYN…NVAV). At Lys-231 the chain carries N6-(retinylidene)lysine.

This sequence belongs to the archaeal/bacterial/fungal opsin family. Contains one covalently linked retinal chromophore.

The protein resides in the cell membrane. Its function is as follows. Light-driven proton pump that generates photothrophic energy. In Gamma-proteobacterium EBAC31A08, this protein is Green-light absorbing proteorhodopsin.